The primary structure comprises 323 residues: MVKATKAEKKIAYDTKLCQLIDEYTQILVVAADNVGSTQLQNIRKGLRGDSVVLMGKNTMMKRSVRIHSENSGNTAILNLLPLLQGNVGLIFTKGDLKEVSEEVAKYKVGAPARVGLVAPIDVVVQPGNTGLDPSQTSFFQVLNIPTKINKGTVEIITPVELIKQGDKVGSSEAALLAKLGIRPFSYGLVVQSVYDNGSVFSPEVLDLTEDQLVEKFASGISMVTSLALAVSYPTLAAAPHMFINAYKNALAIAVATDYTFPQAEKVKEFLKDPSKFVVAAAAVSADAGGGSAQAGAAAKVEEKKEESDEEDYEGGFGLFDEE.

Residues 287–323 form a disordered region; the sequence is DAGGGSAQAGAAAKVEEKKEESDEEDYEGGFGLFDEE. Residue serine 308 is modified to Phosphoserine. Acidic residues predominate over residues 308–323; sequence SDEEDYEGGFGLFDEE. Phosphotyrosine is present on tyrosine 313.

Belongs to the universal ribosomal protein uL10 family. P0 forms a pentameric complex by interaction with dimers of P1 and P2.

In terms of biological role, ribosomal protein P0 is the functional equivalent of E.coli protein L10. This is Large ribosomal subunit protein uL10x (RPP0C) from Arabidopsis thaliana (Mouse-ear cress).